The primary structure comprises 503 residues: Lysine--tRNA ligase (503 aa).

Residues Glu-412 and Glu-419 each contribute to the Mg(2+) site.

This sequence belongs to the class-II aminoacyl-tRNA synthetase family. In terms of assembly, homodimer. The cofactor is Mg(2+).

Its subcellular location is the cytoplasm. The catalysed reaction is tRNA(Lys) + L-lysine + ATP = L-lysyl-tRNA(Lys) + AMP + diphosphate. The protein is Lysine--tRNA ligase of Idiomarina loihiensis (strain ATCC BAA-735 / DSM 15497 / L2-TR).